The sequence spans 182 residues: Riboflavin kinase (182 aa).

The Mg(2+) site is built by T39 and N41. The active-site Nucleophile is E117.

Belongs to the flavokinase family. It depends on Zn(2+) as a cofactor. The cofactor is Mg(2+).

It catalyses the reaction riboflavin + ATP = FMN + ADP + H(+). Its pathway is cofactor biosynthesis; FMN biosynthesis; FMN from riboflavin (ATP route): step 1/1. In terms of biological role, catalyzes the phosphorylation of riboflavin (vitamin B2) to form flavin mononucleotide (FMN) coenzyme. This is Riboflavin kinase (FMN1) from Lodderomyces elongisporus (strain ATCC 11503 / CBS 2605 / JCM 1781 / NBRC 1676 / NRRL YB-4239) (Yeast).